We begin with the raw amino-acid sequence, 276 residues long: Undecaprenyl-diphosphatase (276 aa).

7 helical membrane passes run 42–62, 88–108, 116–136, 149–169, 187–207, 222–242, and 253–273; these read AVTAFTAVIQMGAILAAIVYF, ALLGWYVIAGTIPIGLAGYLG, LRSLWYVVAGLVLWSIAIVYA, MRLPDAVFIGVIQVLALVPGV, VAATRFSFLLAIPALLAAGIF, SLVVGTGMAFLTAYASIAWLL, and FVWYRVTVAVFVVAALTTGLV.

The protein belongs to the UppP family.

It localises to the cell membrane. The catalysed reaction is di-trans,octa-cis-undecaprenyl diphosphate + H2O = di-trans,octa-cis-undecaprenyl phosphate + phosphate + H(+). In terms of biological role, catalyzes the dephosphorylation of undecaprenyl diphosphate (UPP). Confers resistance to bacitracin. The sequence is that of Undecaprenyl-diphosphatase from Acidothermus cellulolyticus (strain ATCC 43068 / DSM 8971 / 11B).